A 456-amino-acid polypeptide reads, in one-letter code: tRNA-2-methylthio-N(6)-dimethylallyladenosine synthase (456 aa).

Positions 19–136 (LTFNVQTFGC…LAELIYARHT (118 aa)) constitute an MTTase N-terminal domain. Residues Cys28, Cys63, Cys97, Cys173, Cys177, and Cys180 each coordinate [4Fe-4S] cluster. In terms of domain architecture, Radical SAM core spans 159 to 389 (QKYKFKAGVN…LTTIRESSSK (231 aa)). The region spanning 392 to 455 (KDDEGKIAEV…GFYYMGEMME (64 aa)) is the TRAM domain.

The protein belongs to the methylthiotransferase family. MiaB subfamily. Monomer. [4Fe-4S] cluster serves as cofactor.

It localises to the cytoplasm. The enzyme catalyses N(6)-dimethylallyladenosine(37) in tRNA + (sulfur carrier)-SH + AH2 + 2 S-adenosyl-L-methionine = 2-methylsulfanyl-N(6)-dimethylallyladenosine(37) in tRNA + (sulfur carrier)-H + 5'-deoxyadenosine + L-methionine + A + S-adenosyl-L-homocysteine + 2 H(+). Its function is as follows. Catalyzes the methylthiolation of N6-(dimethylallyl)adenosine (i(6)A), leading to the formation of 2-methylthio-N6-(dimethylallyl)adenosine (ms(2)i(6)A) at position 37 in tRNAs that read codons beginning with uridine. The chain is tRNA-2-methylthio-N(6)-dimethylallyladenosine synthase from Lachnoclostridium phytofermentans (strain ATCC 700394 / DSM 18823 / ISDg) (Clostridium phytofermentans).